The chain runs to 839 residues: Heat shock 70 kDa protein 4L (839 aa).

2 positions are modified to phosphoserine: Ser-74 and Ser-508. Basic and acidic residues predominate over residues 503–554 (LEGDHSDAPMETETSFKNENKDNMDKMQVDQEEGHQKCHAEHTPEEEIDHTG). Positions 503 to 567 (LEGDHSDAPM…KSAVSDKQDR (65 aa)) are disordered. Thr-545 is subject to Phosphothreonine. Residue Ser-579 is modified to Phosphoserine. At Thr-761 the chain carries Phosphothreonine. A disordered region spans residues 786–839 (IYKPKPKAEVPEDKPKANSEHNGPMDGQSGTETKSDSTKDSSQHTKSSGEMEVD). Basic and acidic residues-rich tracts occupy residues 791–804 (PKAE…KANS) and 818–839 (TKSD…MEVD).

This sequence belongs to the heat shock protein 70 family. Homodimer.

The protein localises to the cytoplasm. The protein resides in the nucleus. Functionally, possesses chaperone activity in vitro where it inhibits aggregation of citrate synthase. The chain is Heat shock 70 kDa protein 4L (HSPA4L) from Homo sapiens (Human).